A 345-amino-acid chain; its full sequence is Tryptophan--tRNA ligase (345 aa).

Residues 22–24 (QPS) and 30–31 (GN) each bind ATP. A 'HIGH' region motif is present at residues 23 to 31 (PSGELTIGN). Position 146 (Asp-146) interacts with L-tryptophan. Residues 158–160 (GID), Val-197, and 206–210 (KMSKS) each bind ATP. Positions 206-210 (KMSKS) match the 'KMSKS' region motif.

This sequence belongs to the class-I aminoacyl-tRNA synthetase family. As to quaternary structure, homodimer.

The protein localises to the cytoplasm. It carries out the reaction tRNA(Trp) + L-tryptophan + ATP = L-tryptophyl-tRNA(Trp) + AMP + diphosphate + H(+). In terms of biological role, catalyzes the attachment of tryptophan to tRNA(Trp). This Photorhabdus laumondii subsp. laumondii (strain DSM 15139 / CIP 105565 / TT01) (Photorhabdus luminescens subsp. laumondii) protein is Tryptophan--tRNA ligase.